Reading from the N-terminus, the 192-residue chain is Thymidine kinase (192 aa).

Residues 9–16 and 87–90 each bind ATP; these read SSMNAGKS and DEAQ. Residue glutamate 88 is the Proton acceptor of the active site. The Zn(2+) site is built by cysteine 145, cysteine 147, cysteine 182, and histidine 185.

It belongs to the thymidine kinase family. In terms of assembly, homotetramer.

Its subcellular location is the cytoplasm. The enzyme catalyses thymidine + ATP = dTMP + ADP + H(+). The polypeptide is Thymidine kinase (Colwellia psychrerythraea (strain 34H / ATCC BAA-681) (Vibrio psychroerythus)).